Reading from the N-terminus, the 152-residue chain is UPF0336 protein Tfu_2666 (152 aa).

The 110-residue stretch at 7–116 (YLGRAYELPE…TTITDIKSLA (110 aa)) folds into the MaoC-like domain.

The protein belongs to the UPF0336 family.

This Thermobifida fusca (strain YX) protein is UPF0336 protein Tfu_2666.